A 212-amino-acid polypeptide reads, in one-letter code: Riboflavin kinase (212 aa).

Residues 1-83 (MTELYCERKT…NLLRYFDIAS (83 aa)) are unknown. The tract at residues 84–212 (IKLVGRVVTG…GDRVELEVYL (129 aa)) is riboflavin kinase. 93 to 98 (GLGEGA) contacts CDP. Positions 122 and 124 each coordinate Mg(2+). 2 residues coordinate FMN: T179 and E187. CDP is bound at residue 192–195 (VRVR).

The protein belongs to the archaeal riboflavin kinase family. Mg(2+) serves as cofactor.

The enzyme catalyses riboflavin + CTP = CDP + FMN + H(+). It functions in the pathway cofactor biosynthesis; FMN biosynthesis; FMN from riboflavin (CTP route): step 1/1. Catalyzes the CTP-dependent phosphorylation of riboflavin (vitamin B2) to form flavin mononucleotide (FMN). In Pyrobaculum calidifontis (strain DSM 21063 / JCM 11548 / VA1), this protein is Riboflavin kinase (ribK).